The primary structure comprises 504 residues: Argininosuccinate lyase 2 (504 aa).

Belongs to the lyase 1 family. Argininosuccinate lyase subfamily.

The protein localises to the cytoplasm. It carries out the reaction 2-(N(omega)-L-arginino)succinate = fumarate + L-arginine. It participates in amino-acid biosynthesis; L-arginine biosynthesis; L-arginine from L-ornithine and carbamoyl phosphate: step 3/3. This is Argininosuccinate lyase 2 from Agrobacterium fabrum (strain C58 / ATCC 33970) (Agrobacterium tumefaciens (strain C58)).